Consider the following 403-residue polypeptide: Ribosomal RNA large subunit methyltransferase I (403 aa).

The region spanning 9 to 88 (YPRLVLSKGR…ESIDIAFFTR (80 aa)) is the PUA domain.

This sequence belongs to the methyltransferase superfamily. RlmI family.

It localises to the cytoplasm. It carries out the reaction cytidine(1962) in 23S rRNA + S-adenosyl-L-methionine = 5-methylcytidine(1962) in 23S rRNA + S-adenosyl-L-homocysteine + H(+). Specifically methylates the cytosine at position 1962 (m5C1962) of 23S rRNA. This Salmonella schwarzengrund (strain CVM19633) protein is Ribosomal RNA large subunit methyltransferase I.